Here is a 209-residue protein sequence, read N- to C-terminus: A-type ATP synthase subunit D (209 aa).

This sequence belongs to the V-ATPase D subunit family. As to quaternary structure, has multiple subunits with at least A(3), B(3), C, D, E, F, H, I and proteolipid K(x).

It is found in the cell membrane. Functionally, component of the A-type ATP synthase that produces ATP from ADP in the presence of a proton gradient across the membrane. This chain is A-type ATP synthase subunit D, found in Sulfolobus acidocaldarius (strain ATCC 33909 / DSM 639 / JCM 8929 / NBRC 15157 / NCIMB 11770).